We begin with the raw amino-acid sequence, 77 residues long: Translation initiation factor IF-1, chloroplastic (77 aa).

The S1-like domain occupies 1–71 (MKEQKWIHEG…TRGRIIYRLR (71 aa)).

This sequence belongs to the IF-1 family. Component of the 30S ribosomal translation pre-initiation complex which assembles on the 30S ribosome in the order IF-2 and IF-3, IF-1 and N-formylmethionyl-tRNA(fMet); mRNA recruitment can occur at any time during PIC assembly.

It is found in the plastid. The protein resides in the chloroplast. Its function is as follows. One of the essential components for the initiation of protein synthesis. Stabilizes the binding of IF-2 and IF-3 on the 30S subunit to which N-formylmethionyl-tRNA(fMet) subsequently binds. Helps modulate mRNA selection, yielding the 30S pre-initiation complex (PIC). Upon addition of the 50S ribosomal subunit IF-1, IF-2 and IF-3 are released leaving the mature 70S translation initiation complex. The sequence is that of Translation initiation factor IF-1, chloroplastic from Garrya elliptica (Wavyleaf silktassel).